The following is a 74-amino-acid chain: Chitinases 70, 30, and 20.5 kDa (74 aa).

Positions 1 to 27 (XTSATATYAKTQDWGSCFEGKWTIKNT) are N-terminus of 70 kDa chitinase. Positions 28–52 (AACSSYPSWVAGRSYAAGDIVYYTD) are N-terminus of 30 kDa chitinase. The tract at residues 53 to 74 (XGYTDLPVSRQKMCQNGMVTNC) is N-terminus of 20.5 kDa chitinase.

It belongs to the glycosyl hydrolase 18 family. Chitinase class II subfamily. In terms of assembly, homodimer, but homotrimers and homotetramers could be observed for the 20.5 and 30 kDa chitinases. In terms of processing, the 70 kDa chitinase is probably the precursor protein of the 30 and 20.5 kDa chitinases.

The catalysed reaction is Random endo-hydrolysis of N-acetyl-beta-D-glucosaminide (1-&gt;4)-beta-linkages in chitin and chitodextrins.. In terms of biological role, able to cleave chitin oligomers from N=3 to 6. In Streptomyces olivaceoviridis (Streptomyces corchorusii), this protein is Chitinases 70, 30, and 20.5 kDa.